We begin with the raw amino-acid sequence, 72 residues long: Crustacean hyperglycemic hormone (72 aa).

3 cysteine pairs are disulfide-bonded: Cys-7-Cys-43, Cys-23-Cys-39, and Cys-26-Cys-52. Val-72 bears the Valine amide mark.

The protein localises to the secreted. Its function is as follows. Hormone found in the sinus gland of isopods and decapods which controls the blood sugar level. Has a secretagogue action over the amylase released from the midgut gland. May act as a stress hormone and may be involved in the control of molting and reproduction. The polypeptide is Crustacean hyperglycemic hormone (Penaeus schmitti (White shrimp)).